Here is an 84-residue protein sequence, read N- to C-terminus: MPLIEVDLLNPTAASEAKAHKMKRLVPTPNSYFLEIKCPKCGATTTTFSHAHRQILCQKCGQPLGQPTGGKLKLTQQCKFRIKK.

The C4-type zinc finger occupies 38–60; the sequence is CPKCGATTTTFSHAHRQILCQKC.

It belongs to the eukaryotic ribosomal protein eS27 family. In terms of assembly, component of the small ribosomal subunit. The cofactor is Zn(2+).

The protein localises to the cytoplasm. In terms of biological role, component of the small ribosomal subunit. The ribosome is a large ribonucleoprotein complex responsible for the synthesis of proteins in the cell. Required for proper rRNA processing and maturation of 18S rRNAs. The sequence is that of Small ribosomal subunit protein eS27 (RPS27) from Entamoeba histolytica (strain ATCC 30459 / HM-1:IMSS / ABRM).